A 634-amino-acid polypeptide reads, in one-letter code: Protection of telomeres protein 1 (634 aa).

2 DNA-binding regions span residues Lys33–Thr48 and Ser270–Arg273.

This sequence belongs to the telombin family. In terms of assembly, homodimer or homooligomer. Component of the shelterin complex (telosome) composed of TERF1, TERF2, TINF2, TERF2IP, ACD and POT1. Binds single-stranded telomeric DNA as a monomer. Associated component of the telomerase holoenzyme complex. Found in a complex with TERF1, TINF2 and TNKS1. Interacts with TNKS1. Forms heterodimers with ACD. Identified in a complex with ACD and single-stranded telomeric DNA. Ubiquitous.

Its subcellular location is the nucleus. It localises to the chromosome. The protein resides in the telomere. Its function is as follows. Component of the telomerase ribonucleoprotein (RNP) complex that is essential for the replication of chromosome termini. Is a component of the double-stranded telomeric DNA-binding TRF1 complex which is involved in the regulation of telomere length by cis-inhibition of telomerase. Also acts as a single-stranded telomeric DNA-binding protein and thus may act as a downstream effector of the TRF1 complex and may transduce information about telomere maintenance and/or length to the telomere terminus. Component of the shelterin complex (telosome) that is involved in the regulation of telomere length and protection. Shelterin associates with arrays of double-stranded TTAGGG repeats added by telomerase and protects chromosome ends; without its protective activity, telomeres are no longer hidden from the DNA damage surveillance and chromosome ends are inappropriately processed by DNA repair pathways. Binds to two or more telomeric single-stranded 5'-TTAGGG-3' repeats (G-strand) and with high specificity to a minimal telomeric single-stranded 5'-TAGGGTTAG-3' sequence. Binds telomeric single-stranded sequences internally or at proximity of a 3'-end. Its activity is TERT dependent but it does not increase TERT activity by itself. In contrast, the ACD-POT1 heterodimer enhances telomere elongation by increasing telomerase processivity. The protein is Protection of telomeres protein 1 (POT1) of Homo sapiens (Human).